The sequence spans 796 residues: AUGMIN subunit 5 (796 aa).

A disordered region spans residues 79 to 120 (HGGSSNASIGSSVNPGKEESKSKGRRKDKTVTGESSSYAEDR). The span at 80–92 (GGSSNASIGSSVN) shows a compositional bias: polar residues. Coiled-coil stretches lie at residues 115–191 (SYAE…EATR) and 462–501 (GKER…LKKK).

It belongs to the HAUS5 family. As to quaternary structure, part of the augmin complex composed of 8 subunits. The complex acts on microtubules and interacts with gamma-tubulin in spindles and the phragmoplast.

The protein resides in the cytoplasm. Its subcellular location is the cytoskeleton. The protein localises to the spindle. It is found in the phragmoplast. Functionally, involved in microtubules reorganization during spindle and phragmoplast development. In Arabidopsis thaliana (Mouse-ear cress), this protein is AUGMIN subunit 5.